We begin with the raw amino-acid sequence, 350 residues long: Twinfilin-1 (350 aa).

Ser2 carries the post-translational modification N-acetylserine. Positions 2-139 (SHRTGIQASE…SLHGYKKYLL (138 aa)) constitute an ADF-H 1 domain. A phosphoserine mark is found at Ser143 and Ser277. The region spanning 175–313 (LQGVAFPISR…TADFLYEEVH (139 aa)) is the ADF-H 2 domain. Phosphotyrosine is present on Tyr309. Residues 316-350 (QHAHKQSFAKPKGPAGKRGIRRLIRGPAETEATTD) are disordered. Phosphothreonine is present on Thr349.

The protein belongs to the actin-binding proteins ADF family. Twinfilin subfamily. Interacts with G-actin; ADP-actin form and capping protein (CP). May also be able to interact with TWF2 and phosphoinositides, PI(4,5)P2. When bound to PI(4,5)P2, it is down-regulated. Interacts with ACTG1. Phosphorylated on serine and threonine residues.

The protein resides in the cytoplasm. The protein localises to the cytoskeleton. In terms of biological role, actin-binding protein involved in motile and morphological processes. Inhibits actin polymerization, likely by sequestering G-actin. By capping the barbed ends of filaments, it also regulates motility. Seems to play an important role in clathrin-mediated endocytosis and distribution of endocytic organelles. This Pongo abelii (Sumatran orangutan) protein is Twinfilin-1 (TWF1).